A 288-amino-acid chain; its full sequence is Elongation factor Ts (288 aa).

Residues 79 to 82 (TDFV) form an involved in Mg(2+) ion dislocation from EF-Tu region.

This sequence belongs to the EF-Ts family.

It is found in the cytoplasm. Its function is as follows. Associates with the EF-Tu.GDP complex and induces the exchange of GDP to GTP. It remains bound to the aminoacyl-tRNA.EF-Tu.GTP complex up to the GTP hydrolysis stage on the ribosome. The protein is Elongation factor Ts of Ehrlichia chaffeensis (strain ATCC CRL-10679 / Arkansas).